The primary structure comprises 396 residues: 1-deoxy-D-xylulose 5-phosphate reductoisomerase (396 aa).

NADPH-binding residues include Thr-15, Gly-16, Ser-17, Ile-18, Gly-41, and Asn-130. Residue Lys-131 coordinates 1-deoxy-D-xylulose 5-phosphate. Glu-132 contacts NADPH. Residue Asp-155 coordinates Mn(2+). 1-deoxy-D-xylulose 5-phosphate is bound by residues Ser-156, Glu-157, Ser-181, and His-204. Glu-157 contributes to the Mn(2+) binding site. Gly-210 is an NADPH binding site. Positions 217, 222, 223, and 226 each coordinate 1-deoxy-D-xylulose 5-phosphate. A Mn(2+)-binding site is contributed by Glu-226.

It belongs to the DXR family. The cofactor is Mg(2+). Mn(2+) is required as a cofactor.

The enzyme catalyses 2-C-methyl-D-erythritol 4-phosphate + NADP(+) = 1-deoxy-D-xylulose 5-phosphate + NADPH + H(+). The protein operates within isoprenoid biosynthesis; isopentenyl diphosphate biosynthesis via DXP pathway; isopentenyl diphosphate from 1-deoxy-D-xylulose 5-phosphate: step 1/6. Catalyzes the NADPH-dependent rearrangement and reduction of 1-deoxy-D-xylulose-5-phosphate (DXP) to 2-C-methyl-D-erythritol 4-phosphate (MEP). This chain is 1-deoxy-D-xylulose 5-phosphate reductoisomerase, found in Bifidobacterium longum subsp. infantis (strain ATCC 15697 / DSM 20088 / JCM 1222 / NCTC 11817 / S12).